The sequence spans 156 residues: Large ribosomal subunit protein eL24 (156 aa).

A compositionally biased stretch (basic and acidic residues) spans 110–123; that stretch reads RAAKEKQKQKELEK. The interval 110 to 156 is disordered; the sequence is RAAKEKQKQKELEKKAKKVEKKKPTLAPKQKAAKITQKPAPRVGGKR.

This sequence belongs to the eukaryotic ribosomal protein eL24 family.

This Schistosoma japonicum (Blood fluke) protein is Large ribosomal subunit protein eL24 (RPL24).